The following is a 185-amino-acid chain: Protein GrpE (185 aa).

Positions 1–44 are disordered; sequence MSEEELTNGPGPEPQPEPLEVESAPLEAAPAGEPDKALLEAQQQ.

It belongs to the GrpE family. As to quaternary structure, homodimer.

The protein resides in the cytoplasm. Functionally, participates actively in the response to hyperosmotic and heat shock by preventing the aggregation of stress-denatured proteins, in association with DnaK and GrpE. It is the nucleotide exchange factor for DnaK and may function as a thermosensor. Unfolded proteins bind initially to DnaJ; upon interaction with the DnaJ-bound protein, DnaK hydrolyzes its bound ATP, resulting in the formation of a stable complex. GrpE releases ADP from DnaK; ATP binding to DnaK triggers the release of the substrate protein, thus completing the reaction cycle. Several rounds of ATP-dependent interactions between DnaJ, DnaK and GrpE are required for fully efficient folding. The chain is Protein GrpE from Methylococcus capsulatus (strain ATCC 33009 / NCIMB 11132 / Bath).